A 2242-amino-acid polypeptide reads, in one-letter code: DEP domain-containing protein DDB_G0279099 (2242 aa).

Disordered stretches follow at residues Ser-388 to Ser-465, Asp-576 to Val-644, Pro-701 to Lys-730, Asp-871 to Ser-965, Gln-1077 to Ser-1194, Gly-1287 to Ser-1336, Ser-1384 to Glu-1414, Ala-1446 to Gly-1471, and Ser-1502 to Asn-1521. Positions Ile-392–Asn-440 form a coiled coil. Over residues Gly-581–Asp-614 the composition is skewed to low complexity. Over residues Glu-622 to Asp-631 the composition is skewed to acidic residues. Composition is skewed to polar residues over residues Asn-632 to Ser-642 and His-719 to Gln-729. A compositionally biased stretch (low complexity) spans Pro-872–Ser-955. Residues Ile-1066–Phe-1101 adopt a coiled-coil conformation. Residues Gln-1082–Ser-1106 are compositionally biased toward basic and acidic residues. Composition is skewed to low complexity over residues Ser-1108–Ala-1182 and Gly-1287–Ser-1299. Over residues Ala-1300–Ile-1311 the composition is skewed to polar residues. Low complexity-rich tracts occupy residues Asn-1312 to Ser-1336, Ser-1384 to Asn-1410, and Ala-1446 to Ser-1470. A DEP domain is found at Ile-1556–Glu-1629. Residues Thr-1645–Ser-1668 are compositionally biased toward low complexity. Disordered regions lie at residues Thr-1645–Asn-1763, Asp-1803–Gln-1910, Asn-2122–Lys-2145, and Asn-2165–Met-2218. The span at Ile-1669 to Leu-1702 shows a compositional bias: polar residues. Low complexity-rich tracts occupy residues Ser-1703–Ser-1760 and Gly-1807–Ser-1848. The stretch at Leu-1791–Asn-1821 forms a coiled coil. Composition is skewed to polar residues over residues Gly-1849–Leu-1871 and Tyr-1879–His-1889. Composition is skewed to low complexity over residues Gln-1890–Gln-1910 and Asn-2122–Asn-2133. Basic and acidic residues-rich tracts occupy residues Ser-2166–His-2181 and Asp-2192–Met-2218.

The protein in the N-terminal section; belongs to the IML1 family.

The chain is DEP domain-containing protein DDB_G0279099 from Dictyostelium discoideum (Social amoeba).